The primary structure comprises 1375 residues: ARF guanine-nucleotide exchange factor GNL2 (1375 aa).

Positions 486–676 (HIRVRKAQKR…SELFQSIATN (191 aa)) constitute an SEC7 domain. The active site involves E590.

Homodimer. In terms of tissue distribution, preferentially expressed in mature pollen grains and growing pollen tubes.

It is found in the cytoplasm. It localises to the cytosol. The protein resides in the membrane. In terms of biological role, activates the ARF proteins by exchanging bound GDP for free GTP. Plays a role in vesicular protein sorting. Essential for pollen germination. This is ARF guanine-nucleotide exchange factor GNL2 (GNL2) from Arabidopsis thaliana (Mouse-ear cress).